A 356-amino-acid polypeptide reads, in one-letter code: Phenylalanine--tRNA ligase alpha subunit (356 aa).

Position 260 (E260) interacts with Mg(2+).

The protein belongs to the class-II aminoacyl-tRNA synthetase family. Phe-tRNA synthetase alpha subunit type 1 subfamily. As to quaternary structure, tetramer of two alpha and two beta subunits. It depends on Mg(2+) as a cofactor.

The protein resides in the cytoplasm. It carries out the reaction tRNA(Phe) + L-phenylalanine + ATP = L-phenylalanyl-tRNA(Phe) + AMP + diphosphate + H(+). In Gluconobacter oxydans (strain 621H) (Gluconobacter suboxydans), this protein is Phenylalanine--tRNA ligase alpha subunit.